A 236-amino-acid polypeptide reads, in one-letter code: Putative protein ZBED10P (236 aa).

In Homo sapiens (Human), this protein is Putative protein ZBED10P.